Consider the following 283-residue polypeptide: MALMKLFSRSNGKVLVDDLSEEGQKRLDLANNKKKLLSARPLTKGRMSIDQAATVLGLEPFSFADIKVNKYDMFTAKQDYSIKANRVATFCIAVDPFWFHKPLTYYPFFRIATFAMVWIGVKGRAAGTTTLKIIDKSYVDPQDQVEVEVTYPICKNFAVLGSLPNFLALEDKTNLRVSVSIQGATVQNCVISRALWFWGIERTDLPVSMKTTDTVMFEFEPLEDFNVNHLSSFSKFTTNVVQKAVGGAFVTKSFPELDSQKEFGVVKQPKKIPIMKPKRSIFD.

This sequence belongs to the tenuiviruses pc4 protein family.

Functionally, transports viral genome to neighboring plant cells directly through plasmosdesmata, without any budding. The movement protein allows efficient cell to cell propagation, by bypassing the host cell wall barrier. The polypeptide is Movement protein (Maize stripe virus (MStV)).